The primary structure comprises 328 residues: MNNSAFTFQTLHPDTIMDALFEHGIRVDSGLTPLNSYENRVYQFQDEDRRRFVVKFYRPERWTADQILEEHQFALQLVNDEVPVAAPVAFNGQTLLNHQGFYFAVFPSVGGRQFEADNIDQMEAVGRYLGRMHQTGRKQLFIHRPTIGLNEYLIEPRKLFEDATLIPSGLKAAFLKATDELIAAVTAHWREDFTVLRLHGDCHAGNILWRDGPMFVDLDDARNGPAVQDLWMLLNGDKAEQRMQLETIIEAYEEFSEFDTAEIGLIEPLRAMRLVYYLAWLMRRWADPAFPKNFPWLTGEDYWLRQTATFIEQAKVLQEPPLQLTPMY.

The active-site Proton acceptor is the aspartate 201. Mg(2+) is bound by residues asparagine 206 and aspartate 217. Residue aspartate 217 is part of the active site.

The protein belongs to the SrkA/RdoA protein kinase family. As to quaternary structure, monomer. Mg(2+) serves as cofactor.

It localises to the cytoplasm. It catalyses the reaction L-seryl-[protein] + ATP = O-phospho-L-seryl-[protein] + ADP + H(+). It carries out the reaction L-threonyl-[protein] + ATP = O-phospho-L-threonyl-[protein] + ADP + H(+). Its function is as follows. A protein kinase that phosphorylates Ser and Thr residues. Probably acts to suppress the effects of stress linked to accumulation of reactive oxygen species. Probably involved in the extracytoplasmic stress response. The sequence is that of Stress response kinase A from Escherichia coli O6:H1 (strain CFT073 / ATCC 700928 / UPEC).